A 195-amino-acid polypeptide reads, in one-letter code: Imidazoleglycerol-phosphate dehydratase (195 aa).

This sequence belongs to the imidazoleglycerol-phosphate dehydratase family.

The protein resides in the cytoplasm. The enzyme catalyses D-erythro-1-(imidazol-4-yl)glycerol 3-phosphate = 3-(imidazol-4-yl)-2-oxopropyl phosphate + H2O. The protein operates within amino-acid biosynthesis; L-histidine biosynthesis; L-histidine from 5-phospho-alpha-D-ribose 1-diphosphate: step 6/9. The protein is Imidazoleglycerol-phosphate dehydratase of Methylobacterium radiotolerans (strain ATCC 27329 / DSM 1819 / JCM 2831 / NBRC 15690 / NCIMB 10815 / 0-1).